We begin with the raw amino-acid sequence, 416 residues long: Squalene synthase (416 aa).

2 helical membrane-spanning segments follow: residues 285-304 (VINF…NACY) and 386-406 (FISY…FLIA).

The protein belongs to the phytoene/squalene synthase family. Mg(2+) is required as a cofactor.

It localises to the endoplasmic reticulum membrane. The catalysed reaction is 2 (2E,6E)-farnesyl diphosphate + NADPH + H(+) = squalene + 2 diphosphate + NADP(+). The enzyme catalyses 2 (2E,6E)-farnesyl diphosphate + NADH + H(+) = squalene + 2 diphosphate + NAD(+). Its pathway is terpene metabolism; lanosterol biosynthesis; lanosterol from farnesyl diphosphate: step 1/3. The protein is Squalene synthase (fdfT) of Dictyostelium discoideum (Social amoeba).